Consider the following 608-residue polypeptide: MGFKKMFKKKDPTESEIRESMQDAGLLVKTDVNGYNRNKFDAYKNYAAQVTQKSSAAPPAARSNPYAVQNQQPSGGNPYAAAAAGGASGSPYGGSDPYSNGGGGNGGSNSNGGSNSNGGSNGSPYKMNNGGNNAAPPPATNSPYSMPQNGAPPKESPAKSSKFKRFGRSKKEEAPPPLEDPRLRPRQYVAPTDYNDAERDDYEPVYDVGLPEEPELPPPPMPGAVNPYASANQGYGSRFGNVDRELEEDKTALFGPRDDPPMDSSYNPALSEQPKYAESVMSMPRQELSQKVRQKEPPAAPAPQTAAVAEYSEATVAVDEEEDLLLGGGSTLNLGRVDSYSYGNEQEYGKQNYTYNYNQGHEFDTVLEEEEKTEQEQEDEDVEAVKQQIRFTKQQSAASTRNALRHAAEAEESGRNTLGMLGSQGERLYNIHSTLALATTQHKIAEDKAKELKTVTRSMFAPHVSNPFNSKRRAQEKEDRIRRERAVAQVEREQRRRDAYDSQQRVVGALDGVGEKSKHRKEMMSKYGSRPGRDRYQFEADEEDDILEDEIDNNLDELSNAAGRLKKLGLAMNEEVEQQNEKLDQIAEQTDDLDISVHLNTARLAGIH.

Disordered regions lie at residues 1–23 (MGFKKMFKKKDPTESEIRESMQD) and 50–307 (VTQK…QTAA). Over residues 9-21 (KKDPTESEIRESM) the composition is skewed to basic and acidic residues. 2 stretches are compositionally biased toward low complexity: residues 54 to 67 (SSAAPPAARSNPYA) and 74 to 85 (SGGNPYAAAAAG). Positions 100–121 (NGGGGNGGSNSNGGSNSNGGSN) are enriched in gly residues. Over residues 122-134 (GSPYKMNNGGNNA) the composition is skewed to low complexity. Residues 169 to 183 (SKKEEAPPPLEDPRL) are compositionally biased toward basic and acidic residues. The segment covering 198-215 (ERDDYEPVYDVGLPEEPE) has biased composition (acidic residues). The segment covering 241–260 (NVDRELEEDKTALFGPRDDP) has biased composition (basic and acidic residues). Residues 390-452 (RFTKQQSAAS…KIAEDKAKEL (63 aa)) enclose the t-SNARE coiled-coil homology 1 domain. The segment at 514–533 (GEKSKHRKEMMSKYGSRPGR) is disordered. Residues 545 to 607 (DILEDEIDNN…HLNTARLAGI (63 aa)) enclose the t-SNARE coiled-coil homology 2 domain.

Belongs to the SNAP-25 family.

This chain is Protein transport protein SEC9 (SEC9), found in Yarrowia lipolytica (strain CLIB 122 / E 150) (Yeast).